The chain runs to 354 residues: Trans-3-hydroxy-L-proline dehydratase (354 aa).

Residue Cys-104 is the Proton acceptor of the active site. Residues 105 to 106, Asp-269, and 274 to 275 each bind substrate; these read GH and GS.

Belongs to the proline racemase family. As to quaternary structure, homodimer. In terms of tissue distribution, ubiquitously expressed.

It carries out the reaction trans-3-hydroxy-L-proline = 1-pyrroline-2-carboxylate + H2O. Its function is as follows. Catalyzes the dehydration of trans-3-hydroxy-L-proline to Delta(1)-pyrroline-2-carboxylate (Pyr2C). May be required to degrade trans-3-hydroxy-L-proline from the diet and originating from the degradation of proteins such as collagen-IV that contain it. The chain is Trans-3-hydroxy-L-proline dehydratase (L3HYPDH) from Homo sapiens (Human).